The sequence spans 470 residues: SHUGOSHIN 2 (470 aa).

Residues 72 to 113 (IQKLRINLRSVQEKNLQLAQANSQMLAELNTNRDRLKDLQHE) are a coiled coil. Basic and acidic residues-rich tracts occupy residues 131–143 (VLPR…KDKV) and 150–162 (GDCK…DIKH). Disordered stretches follow at residues 131–176 (VLPR…IKSS) and 358–470 (ESAG…RRKC). The span at 163–172 (KDTKRKRTTR) shows a compositional bias: basic residues. The span at 370 to 381 (SESRHETKEITR) shows a compositional bias: basic and acidic residues. Residues 382 to 392 (KRSFSTRRQST) are compositionally biased toward basic residues. 3 stretches are compositionally biased toward basic and acidic residues: residues 396–406 (SQTDEAIKEIA), 423–438 (TESK…EGMT), and 449–462 (HAAE…EVSL).

The protein belongs to the shugoshin family.

Functionally, dispensable for both meiotic and mitotic cell cycle progression. Required with SGO1 for full protection of centromeric cohesion during anaphase I. Required to prevent precocious release of pericentromeric cohesins during meiosis. Acts redundantly to SGO1. This Arabidopsis thaliana (Mouse-ear cress) protein is SHUGOSHIN 2.